The following is a 490-amino-acid chain: GTPase Der (490 aa).

One can recognise an EngA-type G 1 domain in the interval 1–165 (MRIAILGRPN…RIRQVAEIPL (165 aa)). Residues 7–14 (GRPNVGKS), 54–58 (DTGGV), and 117–120 (NKAD) each bind GTP. The tract at residues 165–184 (LPSAEEQENTQEEEFSSKES) is disordered. The segment covering 169–178 (EEQENTQEEE) has biased composition (acidic residues). Residues 227–400 (LKVALIGHPN…AVDDVYTIAT (174 aa)) enclose the EngA-type G 2 domain. GTP is bound by residues 233–240 (GHPNVGKS), 280–284 (DTAGL), and 345–348 (NKWD). Residues 401–485 (TKLSTSLVNK…PFDLEYKAKP (85 aa)) form the KH-like domain.

This sequence belongs to the TRAFAC class TrmE-Era-EngA-EngB-Septin-like GTPase superfamily. EngA (Der) GTPase family. As to quaternary structure, associates with the 50S ribosomal subunit.

Its function is as follows. GTPase that plays an essential role in the late steps of ribosome biogenesis. In Chlamydia muridarum (strain MoPn / Nigg), this protein is GTPase Der.